The chain runs to 367 residues: Phosphoribosylaminoimidazole-succinocarboxamide synthase (367 aa).

The protein belongs to the SAICAR synthetase family.

The catalysed reaction is 5-amino-1-(5-phospho-D-ribosyl)imidazole-4-carboxylate + L-aspartate + ATP = (2S)-2-[5-amino-1-(5-phospho-beta-D-ribosyl)imidazole-4-carboxamido]succinate + ADP + phosphate + 2 H(+). The protein operates within purine metabolism; IMP biosynthesis via de novo pathway; 5-amino-1-(5-phospho-D-ribosyl)imidazole-4-carboxamide from 5-amino-1-(5-phospho-D-ribosyl)imidazole-4-carboxylate: step 1/2. The sequence is that of Phosphoribosylaminoimidazole-succinocarboxamide synthase from Shewanella sp. (strain MR-7).